The sequence spans 479 residues: UDP-N-acetylmuramate--L-alanine ligase (479 aa).

114–120 (GTHGKTT) lines the ATP pocket.

Belongs to the MurCDEF family.

The protein resides in the cytoplasm. It carries out the reaction UDP-N-acetyl-alpha-D-muramate + L-alanine + ATP = UDP-N-acetyl-alpha-D-muramoyl-L-alanine + ADP + phosphate + H(+). The protein operates within cell wall biogenesis; peptidoglycan biosynthesis. Its function is as follows. Cell wall formation. This is UDP-N-acetylmuramate--L-alanine ligase from Pelodictyon phaeoclathratiforme (strain DSM 5477 / BU-1).